The primary structure comprises 695 residues: DSC E3 ubiquitin ligase complex subunit 1 (695 aa).

Positions 1–25 (MDRRRWVPSTPVVTLLLLFMLFAPA) are cleaved as a signal peptide. At 26 to 319 (PRLPSRNGES…KGPRNFVLEN (294 aa)) the chain is on the lumenal side. Residues 320 to 340 (HLVRFSSLYIFIVLSQIFVLL) form a helical membrane-spanning segment. At 341–353 (RQMRINSPSHVQR) the chain is on the cytoplasmic side. The helical transmembrane segment at 354 to 374 (LSFLTIAMQAGLDAYIAIFFL) threads the bilayer. The Lumenal portion of the chain corresponds to 375-382 (STNAVIEK). The chain crosses the membrane as a helical span at residues 383 to 403 (GYLPFVSVAFLSLVPSVMFTM). At 404 to 486 (RYLALILRVQ…QRDWSAVCLR (83 aa)) the chain is on the cytoplasmic side. The segment at 419–473 (PPAPRPVTNNSSNNNTNQSNASNENSPNAPSAANDNTETTTVNPPQEDDQPMTQH) is disordered. Residues 427–454 (NNSSNNNTNQSNASNENSPNAPSAANDN) are compositionally biased toward low complexity. The chain crosses the membrane as a helical span at residues 487–507 (FYFIILVVCIASLYSAFWPVI). Residues 508 to 509 (YR) are Lumenal-facing. The chain crosses the membrane as a helical span at residues 510–530 (FYFISALIFTSYSFWIPQIIQ). Topologically, residues 531 to 540 (NVKQGTSRSF) are cytoplasmic. Residues 541-561 (TWTYILGASVLRLYLPLAIFI) form a helical membrane-spanning segment. The Lumenal portion of the chain corresponds to 562–572 (DSELILGFPPK). A helical membrane pass occupies residues 573–593 (YFFALGLVLWMLFQVLVLLVQ). Residues 594 to 695 (DTLGPRFFLP…PVCRCHLPAV (102 aa)) are Cytoplasmic-facing. The segment at 634 to 689 (CPICMQPIELVSTGSTLNPASMMVRRNYMLTPCHHLYHRQCLLQWMETRSICPVCR) adopts an RING-type; atypical zinc-finger fold.

In terms of assembly, component of the DSC E3 ubiquitin ligase complex composed of dsc1, dsc2, dsc3 and dsc4.

The protein localises to the endoplasmic reticulum membrane. Its subcellular location is the golgi apparatus membrane. The enzyme catalyses S-ubiquitinyl-[E2 ubiquitin-conjugating enzyme]-L-cysteine + [acceptor protein]-L-lysine = [E2 ubiquitin-conjugating enzyme]-L-cysteine + N(6)-ubiquitinyl-[acceptor protein]-L-lysine.. It participates in protein modification; protein ubiquitination. Its function is as follows. Catalytic component of the DSC E3 ubiquitin ligase complex which is required for the sre1 transcriptional activator proteolytic cleavage to release the soluble transcription factor from the membrane in low oxygen or sterol conditions. The complex also plays an important role in the multivesicular body (MVB) pathway and functions in a post-endoplasmic reticulum pathway for protein degradation. The protein is DSC E3 ubiquitin ligase complex subunit 1 (dsc1) of Schizosaccharomyces pombe (strain 972 / ATCC 24843) (Fission yeast).